We begin with the raw amino-acid sequence, 218 residues long: Ribose-5-phosphate isomerase A (218 aa).

Residues Thr-28–Thr-31, Asp-81–Asp-84, and Lys-94–Gly-97 contribute to the substrate site. Glu-103 functions as the Proton acceptor in the catalytic mechanism. Lys-121 is a binding site for substrate.

This sequence belongs to the ribose 5-phosphate isomerase family. As to quaternary structure, homodimer.

It catalyses the reaction aldehydo-D-ribose 5-phosphate = D-ribulose 5-phosphate. It functions in the pathway carbohydrate degradation; pentose phosphate pathway; D-ribose 5-phosphate from D-ribulose 5-phosphate (non-oxidative stage): step 1/1. Catalyzes the reversible conversion of ribose-5-phosphate to ribulose 5-phosphate. The polypeptide is Ribose-5-phosphate isomerase A (Methylococcus capsulatus (strain ATCC 33009 / NCIMB 11132 / Bath)).